Reading from the N-terminus, the 124-residue chain is Small ribosomal subunit protein bS6 (124 aa).

The disordered stretch occupies residues K100 to N124. A compositionally biased stretch (polar residues) spans G110 to N124.

It belongs to the bacterial ribosomal protein bS6 family.

Functionally, binds together with bS18 to 16S ribosomal RNA. The polypeptide is Small ribosomal subunit protein bS6 (Fervidobacterium nodosum (strain ATCC 35602 / DSM 5306 / Rt17-B1)).